Reading from the N-terminus, the 117-residue chain is UPF0122 protein TTE1463 (117 aa).

Belongs to the UPF0122 family.

Its function is as follows. Might take part in the signal recognition particle (SRP) pathway. This is inferred from the conservation of its genetic proximity to ftsY/ffh. May be a regulatory protein. In Caldanaerobacter subterraneus subsp. tengcongensis (strain DSM 15242 / JCM 11007 / NBRC 100824 / MB4) (Thermoanaerobacter tengcongensis), this protein is UPF0122 protein TTE1463.